A 1463-amino-acid polypeptide reads, in one-letter code: DNA polymerase III PolC-type (1463 aa).

Positions 425–581 constitute an Exonuclease domain; that stretch reads YVVFDVETTG…YDAEATGRLL (157 aa).

It belongs to the DNA polymerase type-C family. PolC subfamily.

Its subcellular location is the cytoplasm. The enzyme catalyses DNA(n) + a 2'-deoxyribonucleoside 5'-triphosphate = DNA(n+1) + diphosphate. Its function is as follows. Required for replicative DNA synthesis. This DNA polymerase also exhibits 3' to 5' exonuclease activity. The polypeptide is DNA polymerase III PolC-type (Streptococcus suis (strain 98HAH33)).